The chain runs to 313 residues: uncharacterized protein (313 aa).

Residues 2–57 (KLERLLAMVVLLISKKQVQAAELAELFEVSVRTIYRDIETINRAGIPIVTSQGSGG) form the HTH deoR-type domain. Residues 19 to 38 (VQAAELAELFEVSVRTIYRD) constitute a DNA-binding region (H-T-H motif). The WYL domain maps to 131-210 (HTEDQKTLRE…KDLAILHQTF (80 aa)).

The protein localises to the cytoplasm. This is an uncharacterized protein from Bacillus subtilis (strain 168).